The primary structure comprises 103 residues: 6-pyruvoyl tetrahydrobiopterin synthase (103 aa).

Residue alanine 1 is modified to N-acetylalanine. Histidine 27 serves as a coordination point for Zn(2+). Active-site charge relay system residues include histidine 53 and glutamate 92.

This sequence belongs to the PTPS family. Homohexamer formed of two homotrimers in a head to head fashion. Zn(2+) is required as a cofactor.

The catalysed reaction is 7,8-dihydroneopterin 3'-triphosphate = 6-pyruvoyl-5,6,7,8-tetrahydropterin + triphosphate + H(+). The protein operates within cofactor biosynthesis; tetrahydrobiopterin biosynthesis; tetrahydrobiopterin from 7,8-dihydroneopterin triphosphate: step 1/3. In terms of biological role, involved in the biosynthesis of tetrahydrobiopterin, an essential cofactor of aromatic amino acid hydroxylases. Catalyzes the transformation of 7,8-dihydroneopterin triphosphate into 6-pyruvoyl tetrahydropterin. The polypeptide is 6-pyruvoyl tetrahydrobiopterin synthase (pts) (Salmo salar (Atlantic salmon)).